The chain runs to 558 residues: MARVEL domain-containing protein 2 (558 aa).

The segment covering 1–16 (MSNDGRSRNRDRRYDE) has biased composition (basic and acidic residues). Disordered stretches follow at residues 1 to 58 (MSND…PPFG) and 115 to 145 (CSPP…GTFS). Residues 1–194 (MSNDGRSRNR…YMKSWAGLLR (194 aa)) are Cytoplasmic-facing. The segment covering 45 to 58 (PLPPPPLPLQPPFG) has biased composition (pro residues). Phosphoserine occurs at positions 116, 120, and 161. Phosphothreonine is present on T166. The MARVEL domain maps to 188–367 (SWAGLLRILG…SALVCLKLWR (180 aa)). A helical membrane pass occupies residues 195 to 215 (ILGVVELLLGAGVFACVTAYI). At 216-223 (HKDSEWYN) the chain is on the extracellular side. A helical membrane pass occupies residues 224 to 244 (LFGYSQPYGMGGVGGLGSMYG). The Cytoplasmic portion of the chain corresponds to 245–254 (GYYYTGPKTP). The helical transmembrane segment at 255-275 (FVLVVAGLAWITTIIILVLGM) threads the bilayer. Residues 276–291 (SMYYRTILLDSNWWPL) are Extracellular-facing. The chain crosses the membrane as a helical span at residues 292 to 312 (TEFGINVALFILYMAAAIVYV). Residues 313 to 319 (NDTNRGG) lie on the Cytoplasmic side of the membrane. A helical membrane pass occupies residues 320 to 337 (LCYYPLFNTPVNAVFCRV). The Extracellular segment spans residues 338–341 (EGGQ). A helical transmembrane segment spans residues 342 to 362 (IAAMIFLFVTMIVYLISALVC). Residues 363-558 (LKLWRHEAAR…VMNWDVQGYS (196 aa)) are Cytoplasmic-facing. Phosphoserine is present on S387. Residue K412 forms a Glycyl lysine isopeptide (Lys-Gly) (interchain with G-Cter in ubiquitin) linkage. Residues 439–548 (MPDYVAKYPV…IKQRIQEYDK (110 aa)) are a coiled coil. Positions 440-551 (PDYVAKYPVI…RIQEYDKVMN (112 aa)) constitute an OCEL domain.

This sequence belongs to the ELL/occludin family. In terms of assembly, interacts with TJP1. Interacts with the ubiquitin ligase ITCH. Interacts (via C-terminal cytoplasmic domain) with LSR (via the cytoplasmic domain), ILDR1 and ILDR2; the interaction is required to recruit MARVELD2 to tricellular contacts. In terms of processing, ubiquitinated by ITCH; but this ubiquitination does not lead to proteasomal degradation. Polyubiquitinated at Lys-412 via 'Lys-63'-linked ubiquitin chains; deubiquitinated by USP53. Post-translationally, phosphorylated.

The protein localises to the cell membrane. The protein resides in the cell junction. Its subcellular location is the tight junction. Its function is as follows. Plays a role in the formation of tricellular tight junctions and of epithelial barriers. Required for normal hearing via its role in the separation of the endolymphatic and perilymphatic spaces of the organ of Corti in the inner ear, and for normal survival of hair cells in the organ of Corti. This chain is MARVEL domain-containing protein 2, found in Homo sapiens (Human).